Consider the following 567-residue polypeptide: Proline--tRNA ligase (567 aa).

The protein belongs to the class-II aminoacyl-tRNA synthetase family. ProS type 1 subfamily. As to quaternary structure, homodimer.

It is found in the cytoplasm. It carries out the reaction tRNA(Pro) + L-proline + ATP = L-prolyl-tRNA(Pro) + AMP + diphosphate. Functionally, catalyzes the attachment of proline to tRNA(Pro) in a two-step reaction: proline is first activated by ATP to form Pro-AMP and then transferred to the acceptor end of tRNA(Pro). As ProRS can inadvertently accommodate and process non-cognate amino acids such as alanine and cysteine, to avoid such errors it has two additional distinct editing activities against alanine. One activity is designated as 'pretransfer' editing and involves the tRNA(Pro)-independent hydrolysis of activated Ala-AMP. The other activity is designated 'posttransfer' editing and involves deacylation of mischarged Ala-tRNA(Pro). The misacylated Cys-tRNA(Pro) is not edited by ProRS. The chain is Proline--tRNA ligase from Staphylococcus aureus (strain MRSA252).